A 230-amino-acid chain; its full sequence is Maleylacetoacetate isomerase (230 aa).

The GST N-terminal domain occupies 7–95 (LRVTLYTYFR…YLDEAFPDNP (89 aa)). Residues 17-22 (SSCSAR), glutamine 46, valine 60, 79-80 (QS), glutamine 123, and 127-129 (NLR) each bind glutathione. A GST C-terminal domain is found at 104–226 (NPQQRALVRS…HWRTQQDTPT (123 aa)).

It belongs to the GST superfamily. Zeta family. Glutathione serves as cofactor.

Its subcellular location is the cytoplasm. The catalysed reaction is 4-maleylacetoacetate = 4-fumarylacetoacetate. It participates in amino-acid degradation; L-phenylalanine degradation; acetoacetate and fumarate from L-phenylalanine: step 5/6. This chain is Maleylacetoacetate isomerase (maiA), found in Emericella nidulans (strain FGSC A4 / ATCC 38163 / CBS 112.46 / NRRL 194 / M139) (Aspergillus nidulans).